Here is a 465-residue protein sequence, read N- to C-terminus: Ribulose bisphosphate carboxylase large chain (465 aa).

At Lys-4 the chain carries N6,N6,N6-trimethyllysine. Residues Asn-113 and Thr-163 each contribute to the substrate site. The Proton acceptor role is filled by Lys-165. Lys-167 is a substrate binding site. The Mg(2+) site is built by Lys-191, Asp-193, and Glu-194. Lys-191 carries the N6-carboxylysine modification. The Proton acceptor role is filled by His-284. 3 residues coordinate substrate: Arg-285, His-317, and Ser-369.

It belongs to the RuBisCO large chain family. Type I subfamily. In terms of assembly, heterohexadecamer of 8 large chains and 8 small chains; disulfide-linked. The disulfide link is formed within the large subunit homodimers. The cofactor is Mg(2+). In terms of processing, the disulfide bond which can form in the large chain dimeric partners within the hexadecamer appears to be associated with oxidative stress and protein turnover.

It is found in the plastid. The protein resides in the chloroplast. The catalysed reaction is 2 (2R)-3-phosphoglycerate + 2 H(+) = D-ribulose 1,5-bisphosphate + CO2 + H2O. It carries out the reaction D-ribulose 1,5-bisphosphate + O2 = 2-phosphoglycolate + (2R)-3-phosphoglycerate + 2 H(+). RuBisCO catalyzes two reactions: the carboxylation of D-ribulose 1,5-bisphosphate, the primary event in carbon dioxide fixation, as well as the oxidative fragmentation of the pentose substrate in the photorespiration process. Both reactions occur simultaneously and in competition at the same active site. The protein is Ribulose bisphosphate carboxylase large chain of Hamamelis mollis (Chinese witch hazel).